The following is a 244-amino-acid chain: Pyridoxine 5'-phosphate synthase (244 aa).

N7 provides a ligand contact to 3-amino-2-oxopropyl phosphate. 9–10 (DH) provides a ligand contact to 1-deoxy-D-xylulose 5-phosphate. R18 contributes to the 3-amino-2-oxopropyl phosphate binding site. H43 acts as the Proton acceptor in catalysis. 1-deoxy-D-xylulose 5-phosphate is bound by residues R45 and H50. E70 acts as the Proton acceptor in catalysis. T100 serves as a coordination point for 1-deoxy-D-xylulose 5-phosphate. The active-site Proton donor is H191. Residues G192 and 213–214 (GH) each bind 3-amino-2-oxopropyl phosphate.

Belongs to the PNP synthase family. Homooctamer; tetramer of dimers.

The protein resides in the cytoplasm. The enzyme catalyses 3-amino-2-oxopropyl phosphate + 1-deoxy-D-xylulose 5-phosphate = pyridoxine 5'-phosphate + phosphate + 2 H2O + H(+). The protein operates within cofactor biosynthesis; pyridoxine 5'-phosphate biosynthesis; pyridoxine 5'-phosphate from D-erythrose 4-phosphate: step 5/5. Its function is as follows. Catalyzes the complicated ring closure reaction between the two acyclic compounds 1-deoxy-D-xylulose-5-phosphate (DXP) and 3-amino-2-oxopropyl phosphate (1-amino-acetone-3-phosphate or AAP) to form pyridoxine 5'-phosphate (PNP) and inorganic phosphate. This chain is Pyridoxine 5'-phosphate synthase, found in Laribacter hongkongensis (strain HLHK9).